The chain runs to 271 residues: D-methionine-binding lipoprotein MetQ (271 aa).

Residues 1–22 form the signal peptide; the sequence is MAFKFKTFAAVGALIGSLALAG. Residue Cys-23 is the site of N-palmitoyl cysteine attachment. Cys-23 is lipidated: S-diacylglycerol cysteine.

Belongs to the NlpA lipoprotein family.

The protein localises to the cell membrane. Functionally, this protein is a component of a D-methionine permease, a binding protein-dependent, ATP-driven transport system. The polypeptide is D-methionine-binding lipoprotein MetQ (metQ) (Salmonella typhi).